The chain runs to 183 residues: Regulatory protein RecX (183 aa).

Residues 1 to 12 (MTSFPHPSTSES) show a composition bias toward polar residues. The tract at residues 1 to 26 (MTSFPHPSTSESGPDPDSEPNREEQA) is disordered.

Belongs to the RecX family.

Its subcellular location is the cytoplasm. Functionally, modulates RecA activity. The sequence is that of Regulatory protein RecX from Mycobacterium sp. (strain KMS).